We begin with the raw amino-acid sequence, 865 residues long: Adenylate cyclase (865 aa).

Positions 1 to 540 (MYLYIETLKQ…DISSHFPIRL (540 aa)) are catalytic. Residues 546–865 (KALYSPCEIR…FNDYQAVHHH (320 aa)) are regulatory.

Belongs to the adenylyl cyclase class-1 family.

The protein resides in the cytoplasm. The catalysed reaction is ATP = 3',5'-cyclic AMP + diphosphate. The chain is Adenylate cyclase (cya) from Proteus mirabilis.